A 160-amino-acid chain; its full sequence is SUMO-conjugating enzyme SCE1 (160 aa).

A2 bears the N-acetylalanine mark. Positions 5–158 constitute a UBC core domain; that stretch reads IARGRLAEER…VKLQSKQYPA (154 aa). C94 (glycyl thioester intermediate) is an active-site residue.

This sequence belongs to the ubiquitin-conjugating enzyme family. In terms of assembly, interacts with SIZ1 (via PHD domain) and MMS21. Interacts with TCP14 and TCP15. Interacts with KIN10.

It functions in the pathway protein modification; protein sumoylation. SUMO-conjugating enzyme that accepts the SUMO proteins from the E1 SUMO-activating heterodimer SAE1/SAE2 and catalyzes its covalent attachment to other proteins with the E3 SUMO ligases SIZ1 and MMS21. Associates with SIZ1 for sumoylation of the transcription factor GTE3. This Arabidopsis thaliana (Mouse-ear cress) protein is SUMO-conjugating enzyme SCE1 (SCE1).